The sequence spans 215 residues: Probable transaldolase (215 aa).

Lys-83 serves as the catalytic Schiff-base intermediate with substrate.

This sequence belongs to the transaldolase family. Type 3B subfamily.

The protein localises to the cytoplasm. The enzyme catalyses D-sedoheptulose 7-phosphate + D-glyceraldehyde 3-phosphate = D-erythrose 4-phosphate + beta-D-fructose 6-phosphate. The protein operates within carbohydrate degradation; pentose phosphate pathway; D-glyceraldehyde 3-phosphate and beta-D-fructose 6-phosphate from D-ribose 5-phosphate and D-xylulose 5-phosphate (non-oxidative stage): step 2/3. Functionally, transaldolase is important for the balance of metabolites in the pentose-phosphate pathway. The sequence is that of Probable transaldolase from Clostridium kluyveri (strain NBRC 12016).